The following is a 388-amino-acid chain: FFFFKAHKARVGARTSFLTEMERGSRDHHRDHRDHREHRETREPPTLAFHMKSWKTINKSLKAFAKLLKENATVTFTPQPSIIIQSAKNHLVQKLTIQAECLFLSDTDRFLTKTINNHIPLFESFMNIISNPEVTKMYIQHDSDLYTRVLVTASDTCTQASVPCVHGQEVVRDTGRSPLRIDLDHSTVSDVLKWLSPVTKTKRSGKSDALMAHIIVQVNPPTIKFVTEMNELEFSNSNKVIFYDVKNMRFNLSAKNLQQALSMCAVIKTSCSLRTVAAKDCKLILTSKSTLLTVEAFLTQEQLKEESRFERMGKQDDGKGDRSHKNEDGSALASKQEMQYEITNYMVPAKNGTAGSSLFNEKEDSESDDSMHFDYSSNPNPKRQRCVV.

2 disordered regions span residues 20–44 (EMER…TREP) and 306–388 (ESRF…RCVV). Residues 26 to 36 (RDHHRDHRDHR) show a composition bias toward basic residues. A compositionally biased stretch (basic and acidic residues) spans 306–328 (ESRFERMGKQDDGKGDRSHKNED).

The protein belongs to the herpesviridae polymerase accessory protein family.

Functionally, accessory subunit of the DNA polymerase that acts to increase the processivity of polymerization. The protein is DNA polymerase processivity factor (U27) of Homo sapiens (Human).